The sequence spans 552 residues: Putative lipase ATG15 (552 aa).

Over 1-26 (MLHITEKEQTRGLRQLEKRGKRLLPP) the chain is Cytoplasmic. The chain crosses the membrane as a helical; Signal-anchor for type II membrane protein span at residues 27–49 (LIKFIWFCLISAACVAATTFYWL). Residues 50–552 (RLSPVHNIHK…WRFVSHDDKE (503 aa)) are Lumenal-facing. 5 N-linked (GlcNAc...) asparagine glycosylation sites follow: Asn-63, Asn-147, Asn-239, Asn-307, and Asn-391. The Charge relay system role is filled by Ser-409. Asn-526 is a glycosylation site (N-linked (GlcNAc...) asparagine).

This sequence belongs to the AB hydrolase superfamily. Lipase family. Binds to both phosphatidylinositol (PI) and phosphatidylinositol 3,5-bisphosphate (PIP2).

The protein localises to the endosome. It is found in the multivesicular body membrane. Its subcellular location is the prevacuolar compartment membrane. It catalyses the reaction a triacylglycerol + H2O = a diacylglycerol + a fatty acid + H(+). Lipase which is essential for lysis of subvacuolar cytoplasm to vacuole targeted bodies and intravacuolar autophagic bodies. Involved in the lysis of intravacuolar multivesicular body (MVB) vesicles. The intravacuolar membrane disintegration by ATG15 is critical to life span extension. This is Putative lipase ATG15 (ATG15) from Lodderomyces elongisporus (strain ATCC 11503 / CBS 2605 / JCM 1781 / NBRC 1676 / NRRL YB-4239) (Yeast).